The sequence spans 368 residues: Homoserine O-acetyltransferase (368 aa).

Residues Asn-47–Leu-349 form the AB hydrolase-1 domain. The active-site Nucleophile is Ser-153. Residue Arg-221 participates in substrate binding. Residues Asp-311 and His-344 contribute to the active site. Position 345 (Asp-345) interacts with substrate.

The protein belongs to the AB hydrolase superfamily. MetX family. In terms of assembly, homodimer.

The protein localises to the cytoplasm. The catalysed reaction is L-homoserine + acetyl-CoA = O-acetyl-L-homoserine + CoA. It participates in amino-acid biosynthesis; L-methionine biosynthesis via de novo pathway; O-acetyl-L-homoserine from L-homoserine: step 1/1. Functionally, transfers an acetyl group from acetyl-CoA to L-homoserine, forming acetyl-L-homoserine. The protein is Homoserine O-acetyltransferase of Leptospira borgpetersenii serovar Hardjo-bovis (strain JB197).